We begin with the raw amino-acid sequence, 356 residues long: GTPase Obg (356 aa).

Residues 1 to 159 enclose the Obg domain; that stretch reads MKFLDEAKVY…RWIWLRMKLI (159 aa). An OBG-type G domain is found at 160 to 327; it reads ADAGLVGLPN…VLRALTDVIS (168 aa). GTP is bound by residues 166-173, 191-195, 212-215, 279-282, and 308-310; these read GLPNAGKS, FTTLH, DIPG, NKID, and SGV. Mg(2+)-binding residues include Ser173 and Thr193. Residues 329 to 356 form a disordered region; sequence APVSTKAKGEPTENETPPPSTGWSPLSN.

This sequence belongs to the TRAFAC class OBG-HflX-like GTPase superfamily. OBG GTPase family. In terms of assembly, monomer. Mg(2+) serves as cofactor.

It localises to the cytoplasm. An essential GTPase which binds GTP, GDP and possibly (p)ppGpp with moderate affinity, with high nucleotide exchange rates and a fairly low GTP hydrolysis rate. Plays a role in control of the cell cycle, stress response, ribosome biogenesis and in those bacteria that undergo differentiation, in morphogenesis control. The chain is GTPase Obg from Afipia carboxidovorans (strain ATCC 49405 / DSM 1227 / KCTC 32145 / OM5) (Oligotropha carboxidovorans).